A 156-amino-acid chain; its full sequence is Transcription antitermination protein NusB (156 aa).

This sequence belongs to the NusB family.

In terms of biological role, involved in transcription antitermination. Required for transcription of ribosomal RNA (rRNA) genes. Binds specifically to the boxA antiterminator sequence of the ribosomal RNA (rrn) operons. This Xanthomonas oryzae pv. oryzae (strain MAFF 311018) protein is Transcription antitermination protein NusB.